Consider the following 344-residue polypeptide: Arginine N-succinyltransferase (344 aa).

Residue Leu125 participates in succinyl-CoA binding. The active-site Proton donor is the His229.

This sequence belongs to the arginine N-succinyltransferase family.

It catalyses the reaction succinyl-CoA + L-arginine = N(2)-succinyl-L-arginine + CoA + H(+). Its pathway is amino-acid degradation; L-arginine degradation via AST pathway; L-glutamate and succinate from L-arginine: step 1/5. Catalyzes the transfer of succinyl-CoA to arginine to produce N(2)-succinylarginine. The chain is Arginine N-succinyltransferase from Escherichia coli O157:H7.